Consider the following 269-residue polypeptide: MDGNVLLAFGLTLFAGLATGVGSLIAFFTSRTNTKFLSLALGFSAGVMIYVSLVEIFVKAKDALTNALGNTNGYWMTIAGFFGGMLFIALIDKFIPKSSNPHEVKLVEDVNAIKPQVNEDHLMKMGIFTALAIGIHNFPEGIATFMSAINDPNVGIAIAIAVAIHNIPEGIAVSVPIFFATGNRRKAFKLSFLSGLAEPVGALVAFLLLMPFLTDVMFGIIFAGVAGIMVFISLDELLPAAQRYDETHLSMYGLVGGMAVMAISLVLLV.

The next 8 membrane-spanning stretches (helical) occupy residues 5-25, 38-58, 75-95, 125-145, 158-178, 190-210, 212-232, and 249-269; these read VLLAFGLTLFAGLATGVGSLI, SLALGFSAGVMIYVSLVEIFV, WMTIAGFFGGMLFIALIDKFI, MGIFTALAIGIHNFPEGIATF, IAIAVAIHNIPEGIAVSVPIF, LSFLSGLAEPVGALVAFLLLM, FLTDVMFGIIFAGVAGIMVFI, and LSMYGLVGGMAVMAISLVLLV. Positions 137 and 140 each coordinate Fe(2+). The Zn(2+) site is built by Glu140 and His165. Fe(2+) is bound by residues Asn166, Glu169, and Glu198. Glu169 lines the Zn(2+) pocket.

This sequence belongs to the ZIP transporter (TC 2.A.5) family. ZupT subfamily.

It is found in the cell membrane. It catalyses the reaction Zn(2+)(in) = Zn(2+)(out). Functionally, mediates zinc uptake. May also transport other divalent cations. In Lysinibacillus sphaericus (strain C3-41), this protein is Zinc transporter ZupT.